Consider the following 105-residue polypeptide: Heat shock protein HspQ (105 aa).

A disordered region spans residues 75-105 (GEMQEEHPEQPSMDELARSIRQQLQAPRLRN).

Belongs to the HspQ family.

It is found in the cytoplasm. Functionally, involved in the degradation of certain denaturated proteins, including DnaA, during heat shock stress. The polypeptide is Heat shock protein HspQ (Cronobacter sakazakii (strain ATCC BAA-894) (Enterobacter sakazakii)).